The sequence spans 627 residues: Phosphomethylpyrimidine synthase (627 aa).

Residues 1-21 (MSAQQQKNLSESAQVDQQSVQ) are compositionally biased toward polar residues. A disordered region spans residues 1–32 (MSAQQQKNLSESAQVDQQSVQPFPRSQKVYVQ). Substrate contacts are provided by residues Asn231, Met260, Tyr289, His325, 345-347 (SRG), 386-389 (DGLR), and Glu425. Residue His429 coordinates Zn(2+). Tyr452 contacts substrate. His493 provides a ligand contact to Zn(2+). [4Fe-4S] cluster contacts are provided by Cys573, Cys576, and Cys581.

This sequence belongs to the ThiC family. Homodimer. It depends on [4Fe-4S] cluster as a cofactor.

It carries out the reaction 5-amino-1-(5-phospho-beta-D-ribosyl)imidazole + S-adenosyl-L-methionine = 4-amino-2-methyl-5-(phosphooxymethyl)pyrimidine + CO + 5'-deoxyadenosine + formate + L-methionine + 3 H(+). Its pathway is cofactor biosynthesis; thiamine diphosphate biosynthesis. Catalyzes the synthesis of the hydroxymethylpyrimidine phosphate (HMP-P) moiety of thiamine from aminoimidazole ribotide (AIR) in a radical S-adenosyl-L-methionine (SAM)-dependent reaction. The sequence is that of Phosphomethylpyrimidine synthase from Ectopseudomonas mendocina (strain ymp) (Pseudomonas mendocina).